The chain runs to 550 residues: Vacuolar protein 8 (550 aa).

Residue G2 is the site of N-myristoyl glycine attachment. Residues C4 and C7 are each lipidated (S-palmitoyl cysteine). ARM repeat units lie at residues 75 to 114 (TEKD…NLAV), 116 to 155 (AENK…NLAT), 157 to 196 (DENK…NMTH), 198 to 237 (YENR…NIAV), 241 to 280 (HRKR…NLAS), 282 to 321 (ERYQ…NISI), 323 to 363 (PLNE…NLAA), and 454 to 493 (FIEC…QLLE). Residue T548 is modified to Phosphothreonine. S550 bears the Phosphoserine mark.

Belongs to the beta-catenin family.

Its subcellular location is the golgi apparatus membrane. It localises to the vacuole membrane. Its function is as follows. Functions in both vacuole inheritance and protein targeting from the cytoplasm to vacuole. This is Vacuolar protein 8 (vac8) from Schizosaccharomyces pombe (strain 972 / ATCC 24843) (Fission yeast).